Reading from the N-terminus, the 513-residue chain is tRNA A64-2'-O-ribosylphosphate transferase (513 aa).

Its function is as follows. tRNA backbone modifying enzyme that mediates initiator/ elongator tRNA discrimination. This enzyme modifies exclusively the initiator tRNA in position 64 using 5'-phosphoribosyl-1'-pyrophosphate as the modification donor. Recognize the stem-loop IV region that is unique in eukaryotic cytoplasmic initiator tRNAs. The protein is tRNA A64-2'-O-ribosylphosphate transferase (RIT1) of Saccharomyces cerevisiae (strain ATCC 204508 / S288c) (Baker's yeast).